The primary structure comprises 156 residues: Probable cyclic pyranopterin monophosphate synthase (156 aa).

Substrate is bound by residues 74–76 (LCH) and 110–111 (ME). D125 is an active-site residue.

It belongs to the MoaC family. As to quaternary structure, homohexamer; trimer of dimers.

It catalyses the reaction (8S)-3',8-cyclo-7,8-dihydroguanosine 5'-triphosphate = cyclic pyranopterin phosphate + diphosphate. It functions in the pathway cofactor biosynthesis; molybdopterin biosynthesis. Its function is as follows. Catalyzes the conversion of (8S)-3',8-cyclo-7,8-dihydroguanosine 5'-triphosphate to cyclic pyranopterin monophosphate (cPMP). In Thermococcus onnurineus (strain NA1), this protein is Probable cyclic pyranopterin monophosphate synthase.